The sequence spans 154 residues: Superoxide dismutase [Cu-Zn] (154 aa).

Cu cation-binding residues include histidine 47, histidine 49, and histidine 64. The cysteines at positions 58 and 147 are disulfide-linked. Residues histidine 64, histidine 72, histidine 81, and aspartate 84 each coordinate Zn(2+). Residue histidine 121 coordinates Cu cation. The segment at 122 to 143 (GGTDDLGKGGNEESLKTGNAGP) is disordered. Over residues 123–136 (GTDDLGKGGNEESL) the composition is skewed to basic and acidic residues. A substrate-binding site is contributed by arginine 144.

It belongs to the Cu-Zn superoxide dismutase family. In terms of assembly, homodimer. It depends on Cu cation as a cofactor. Zn(2+) is required as a cofactor.

It localises to the cytoplasm. The enzyme catalyses 2 superoxide + 2 H(+) = H2O2 + O2. Destroys radicals which are normally produced within the cells and which are toxic to biological systems. This is Superoxide dismutase [Cu-Zn] (SOD1) from Cordyceps militaris (Caterpillar fungus).